The chain runs to 256 residues: Hydroxyacylglutathione hydrolase (256 aa).

Positions 53, 55, 57, 58, 111, 128, and 166 each coordinate Zn(2+).

It belongs to the metallo-beta-lactamase superfamily. Glyoxalase II family. As to quaternary structure, monomer. It depends on Zn(2+) as a cofactor.

The enzyme catalyses an S-(2-hydroxyacyl)glutathione + H2O = a 2-hydroxy carboxylate + glutathione + H(+). It functions in the pathway secondary metabolite metabolism; methylglyoxal degradation; (R)-lactate from methylglyoxal: step 2/2. In terms of biological role, thiolesterase that catalyzes the hydrolysis of S-D-lactoyl-glutathione to form glutathione and D-lactic acid. The polypeptide is Hydroxyacylglutathione hydrolase (Thiobacillus denitrificans (strain ATCC 25259 / T1)).